Here is a 244-residue protein sequence, read N- to C-terminus: Serine acetyltransferase (244 aa).

Belongs to the transferase hexapeptide repeat family.

Its subcellular location is the cytoplasm. The catalysed reaction is L-serine + acetyl-CoA = O-acetyl-L-serine + CoA. It participates in amino-acid biosynthesis; L-cysteine biosynthesis; L-cysteine from L-serine: step 1/2. This Synechococcus elongatus (strain ATCC 33912 / PCC 7942 / FACHB-805) (Anacystis nidulans R2) protein is Serine acetyltransferase (cysE).